The sequence spans 113 residues: Prefoldin subunit beta (113 aa).

This sequence belongs to the prefoldin subunit beta family. As to quaternary structure, heterohexamer of two alpha and four beta subunits.

The protein localises to the cytoplasm. Molecular chaperone capable of stabilizing a range of proteins. Seems to fulfill an ATP-independent, HSP70-like function in archaeal de novo protein folding. The polypeptide is Prefoldin subunit beta (Methanococcus maripaludis (strain C6 / ATCC BAA-1332)).